Reading from the N-terminus, the 225-residue chain is Small ribosomal subunit protein eS1 (225 aa).

It belongs to the eukaryotic ribosomal protein eS1 family.

The sequence is that of Small ribosomal subunit protein eS1 from Methanococcus maripaludis (strain C6 / ATCC BAA-1332).